The sequence spans 417 residues: Acetate kinase (417 aa).

Asparagine 7 lines the Mg(2+) pocket. ATP is bound at residue lysine 14. Arginine 104 contacts substrate. Aspartate 162 acts as the Proton donor/acceptor in catalysis. ATP contacts are provided by residues 222–226, 297–299, and 346–350; these read HLGNG, DMR, and GIGEN. Glutamate 401 contacts Mg(2+).

It belongs to the acetokinase family. Homodimer. It depends on Mg(2+) as a cofactor. Mn(2+) is required as a cofactor.

The protein localises to the cytoplasm. The enzyme catalyses acetate + ATP = acetyl phosphate + ADP. Its pathway is metabolic intermediate biosynthesis; acetyl-CoA biosynthesis; acetyl-CoA from acetate: step 1/2. Catalyzes the formation of acetyl phosphate from acetate and ATP. Can also catalyze the reverse reaction. The polypeptide is Acetate kinase (Chloroherpeton thalassium (strain ATCC 35110 / GB-78)).